Here is a 116-residue protein sequence, read N- to C-terminus: Large ribosomal subunit protein bL20 (116 aa).

The protein belongs to the bacterial ribosomal protein bL20 family.

Its function is as follows. Binds directly to 23S ribosomal RNA and is necessary for the in vitro assembly process of the 50S ribosomal subunit. It is not involved in the protein synthesizing functions of that subunit. The polypeptide is Large ribosomal subunit protein bL20 (Nautilia profundicola (strain ATCC BAA-1463 / DSM 18972 / AmH)).